Here is a 363-residue protein sequence, read N- to C-terminus: Serine/threonine-protein kinase SRK2A (363 aa).

Residues Tyr4–Phe260 form the Protein kinase domain. Residues Ile10–Ala18 and Lys33 contribute to the ATP site. Catalysis depends on Asp123, which acts as the Proton acceptor. Residues Ser306–Ser363 are disordered. Over residues Gly310–Asp319 the composition is skewed to gly residues. Residues Gly322 to Tyr347 are compositionally biased toward acidic residues. A compositionally biased stretch (basic and acidic residues) spans Asp348–Ser363.

This sequence belongs to the protein kinase superfamily. Ser/Thr protein kinase family. Interacts with TOPP1. Expressed in seedlings.

The catalysed reaction is L-seryl-[protein] + ATP = O-phospho-L-seryl-[protein] + ADP + H(+). It carries out the reaction L-threonyl-[protein] + ATP = O-phospho-L-threonyl-[protein] + ADP + H(+). This chain is Serine/threonine-protein kinase SRK2A (SRK2A), found in Arabidopsis thaliana (Mouse-ear cress).